Reading from the N-terminus, the 653-residue chain is Zinc finger CCCH domain-containing protein 54 (653 aa).

A disordered region spans residues 242–261; that stretch reads NGGGGGGGSPARARRSNGLS. The C3H1-type zinc finger occupies 260-287; that stretch reads LSTRRPCHYFSKGICKNGQNCHYSHHQV. The region spanning 313-396 is the HTH OST-type domain; sequence SLETLEMEIT…GQHSVVLAED (84 aa). An RRM domain is found at 422–497; the sequence is HQIYLTFPAE…SRVLVKPYRE (76 aa). The stretch at 537 to 565 forms a coiled coil; sequence RLMRKQLAEKREMLLEMERRRATVRRLES. The interval 598-623 is disordered; that stretch reads PSLASPDPLEIVSNSQAPPTQAGNIY. A compositionally biased stretch (polar residues) spans 609–620; it reads VSNSQAPPTQAG.

The chain is Zinc finger CCCH domain-containing protein 54 from Oryza sativa subsp. japonica (Rice).